We begin with the raw amino-acid sequence, 562 residues long: Nucleoprotein (562 aa).

The binding site for the cap structure m7GTP stretch occupies residues 53–238 (MRRVKRDDSD…ITQEESQINI (186 aa)). Asp381 and Glu383 together coordinate Mn(2+). Zn(2+)-binding residues include Glu391, Cys498, His501, and Cys522. Residue Asp526 coordinates Mn(2+).

Belongs to the arenaviridae nucleocapsid protein family. As to quaternary structure, homomultimerizes to form the nucleocapsid. Binds to viral genomic RNA. Interacts with glycoprotein G2. Interacts with protein Z; this interaction probably directs the encapsidated genome to budding sites. Interacts with protein L; this interaction does not interfere with Z-L interaction. Interacts with host IKBKE (via Protein kinase domain); the interaction inhibits IKBKE kinase activity.

It is found in the virion. The protein resides in the host cytoplasm. Its function is as follows. Encapsidates the genome, protecting it from nucleases. The encapsidated genomic RNA is termed the nucleocapsid (NC). Serves as template for viral transcription and replication. The increased presence of protein N in host cell does not seem to trigger the switch from transcription to replication as observed in other negative strain RNA viruses. Through the interaction with host IKBKE, strongly inhibits the phosphorylation and nuclear translocation of host IRF3, a protein involved in interferon activation pathway, leading to the inhibition of interferon-beta and IRF3-dependent promoters activation. Also encodes a functional 3'-5' exoribonuclease that degrades preferentially dsRNA substrates and thereby participates in the suppression of interferon induction. The sequence is that of Nucleoprotein from Neotoma (wood rats).